A 287-amino-acid chain; its full sequence is Shikimate dehydrogenase (NADP(+)) (287 aa).

Residues 20-22 (SRS) and Thr67 each bind shikimate. Lys71 acts as the Proton acceptor in catalysis. Glu84 contributes to the NADP(+) binding site. Residues Asn93 and Asp108 each contribute to the shikimate site. Residues 132–136 (GAGGA) and Met226 contribute to the NADP(+) site. Tyr228 lines the shikimate pocket. Gly250 lines the NADP(+) pocket.

Belongs to the shikimate dehydrogenase family. In terms of assembly, homodimer.

The catalysed reaction is shikimate + NADP(+) = 3-dehydroshikimate + NADPH + H(+). It functions in the pathway metabolic intermediate biosynthesis; chorismate biosynthesis; chorismate from D-erythrose 4-phosphate and phosphoenolpyruvate: step 4/7. Involved in the biosynthesis of the chorismate, which leads to the biosynthesis of aromatic amino acids. Catalyzes the reversible NADPH linked reduction of 3-dehydroshikimate (DHSA) to yield shikimate (SA). The polypeptide is Shikimate dehydrogenase (NADP(+)) (Bordetella petrii (strain ATCC BAA-461 / DSM 12804 / CCUG 43448)).